The sequence spans 287 residues: Inorganic pyrophosphatase (287 aa).

Arginine 79 contacts diphosphate. Aspartate 116, aspartate 121, and aspartate 153 together coordinate Mg(2+).

It belongs to the PPase family. Requires Mg(2+) as cofactor.

It is found in the cytoplasm. The enzyme catalyses diphosphate + H2O = 2 phosphate + H(+). In Candida glabrata (strain ATCC 2001 / BCRC 20586 / JCM 3761 / NBRC 0622 / NRRL Y-65 / CBS 138) (Yeast), this protein is Inorganic pyrophosphatase (IPP1).